A 156-amino-acid chain; its full sequence is uncharacterized protein (156 aa).

Helical transmembrane passes span 7–29 (AQIS…SYFL), 42–64 (YFAL…PYLF), 69–88 (AVTG…AITS), 98–120 (AAIW…YPAL), and 133–155 (ALVL…ISRI).

It is found in the cell membrane. This is an uncharacterized protein from Pasteurella multocida (strain Pm70).